Consider the following 373-residue polypeptide: Bifunctional enzyme IspD/IspF (373 aa).

The 2-C-methyl-D-erythritol 4-phosphate cytidylyltransferase stretch occupies residues 1–213 (MSDLTLVLLG…CLQKPSATKR (213 aa)). The interval 213–373 (RIGNGLDVHA…TLHYFDWSEI (161 aa)) is 2-C-methyl-D-erythritol 2,4-cyclodiphosphate synthase. Positions 219 and 221 each coordinate a divalent metal cation. Residues 219-221 (DVH) and 245-246 (HS) each bind 4-CDP-2-C-methyl-D-erythritol 2-phosphate. H253 is a binding site for a divalent metal cation. 4-CDP-2-C-methyl-D-erythritol 2-phosphate is bound by residues 267–269 (DIG), 272–276 (FPDSD), 343–346 (TTTE), F350, and R353.

In the N-terminal section; belongs to the IspD/TarI cytidylyltransferase family. IspD subfamily. It in the C-terminal section; belongs to the IspF family. It depends on a divalent metal cation as a cofactor.

The catalysed reaction is 2-C-methyl-D-erythritol 4-phosphate + CTP + H(+) = 4-CDP-2-C-methyl-D-erythritol + diphosphate. It catalyses the reaction 4-CDP-2-C-methyl-D-erythritol 2-phosphate = 2-C-methyl-D-erythritol 2,4-cyclic diphosphate + CMP. Its pathway is isoprenoid biosynthesis; isopentenyl diphosphate biosynthesis via DXP pathway; isopentenyl diphosphate from 1-deoxy-D-xylulose 5-phosphate: step 2/6. It functions in the pathway isoprenoid biosynthesis; isopentenyl diphosphate biosynthesis via DXP pathway; isopentenyl diphosphate from 1-deoxy-D-xylulose 5-phosphate: step 4/6. In terms of biological role, bifunctional enzyme that catalyzes the formation of 4-diphosphocytidyl-2-C-methyl-D-erythritol from CTP and 2-C-methyl-D-erythritol 4-phosphate (MEP) (IspD), and catalyzes the conversion of 4-diphosphocytidyl-2-C-methyl-D-erythritol 2-phosphate (CDP-ME2P) to 2-C-methyl-D-erythritol 2,4-cyclodiphosphate (ME-CPP) with a corresponding release of cytidine 5-monophosphate (CMP) (IspF). This is Bifunctional enzyme IspD/IspF from Nitratiruptor sp. (strain SB155-2).